We begin with the raw amino-acid sequence, 101 residues long: uncharacterized protein (101 aa).

Positions 39 to 74 (CDERHGRPLPHSQESQHGSATSKKAVRGTADTAPLE) are disordered. Over residues 50-60 (SQESQHGSATS) the composition is skewed to polar residues.

This is an uncharacterized protein from Homo sapiens (Human).